A 428-amino-acid polypeptide reads, in one-letter code: Cyclic AMP-responsive element-binding protein 3-like protein 3-B (428 aa).

At 1–286 (MDHYSDQGGD…VMNGSNKPVQ (286 aa)) the chain is on the cytoplasmic side. Over residues 67 to 83 (VSGSPVWSPSPSDSGIS) the composition is skewed to low complexity. The interval 67-104 (VSGSPVWSPSPSDSGISEDPHSDHIDSPPPNASPPMEP) is disordered. Residues 93-103 (SPPPNASPPME) are compositionally biased toward pro residues. One can recognise a bZIP domain in the interval 210 to 273 (ILKKIRRKIR…ISLMEQLRRL (64 aa)). A basic motif region spans residues 212 to 241 (KKIRRKIRNKQSAQESRKKKKEYIDGLESR). The segment at 252-273 (LQRKVFQLEKCNISLMEQLRRL) is leucine-zipper. A helical; Signal-anchor for type II membrane protein transmembrane segment spans residues 287-303 (AGTCVLVLLLSFTLILL). The Lumenal portion of the chain corresponds to 304-428 (PNLKPFTDTK…SRRSPHADDM (125 aa)). The segment at 381 to 428 (TEYDPESHNHSFDQHDEHHHGDPITGHVATVTLNPRRGSRRSPHADDM) is disordered. Residues 385-402 (PESHNHSFDQHDEHHHGD) show a composition bias toward basic and acidic residues. Asparagine 389 carries an N-linked (GlcNAc...) asparagine glycan.

The protein belongs to the bZIP family. ATF subfamily. In terms of assembly, binds DNA as a dimer. Controlled by regulated intramembrane proteolysis (RIP). A fragment containing the cytoplasmic transcription factor domain is released by proteolysis. The cleavage seems to be performed sequentially by site-1 and site-2 proteases.

The protein localises to the endoplasmic reticulum membrane. It is found in the nucleus. Its function is as follows. Transcriptional activator. Binds the cAMP response element (CRE). Activates transcription through box-B element and CRE. Seems to function synergistically with atf6. Regulates FGF21 transcription. This is Cyclic AMP-responsive element-binding protein 3-like protein 3-B (creb3l3b) from Danio rerio (Zebrafish).